The chain runs to 776 residues: Kinesin-like protein KLP1 (776 aa).

Positions 5–335 (AVKVFVRTRP…LRFASRVRTL (331 aa)) constitute a Kinesin motor domain. Residue 91–98 (GQTGAGKT) participates in ATP binding. A coiled-coil region spans residues 348-371 (ALLLRRYERQIKELKAELAMRDTL). The tract at residues 441-535 (RRATEEGSGA…SNWGDAGPLS (95 aa)) is disordered. Residues 447–460 (GSGAAARGGDSAGP) are compositionally biased toward low complexity. Residues 579–657 (ALADTKASIR…SLKSAREELE (79 aa)) are a coiled coil. Positions 658-776 (PQIQAVAVAR…TQAVNRGLAR (119 aa)) are globular.

Belongs to the TRAFAC class myosin-kinesin ATPase superfamily. Kinesin family.

The protein localises to the cytoplasm. Its subcellular location is the cytoskeleton. It is found in the flagellum axoneme. Functionally, may play a role in rotation or twisting of the central pair microtubules of the flagella axoneme. This is Kinesin-like protein KLP1 (KLP1) from Chlamydomonas reinhardtii (Chlamydomonas smithii).